The chain runs to 546 residues: MPVGSRQNRVQAVRKVSGSTDSTIPREAGIYPIRYTERKERKDVQTVENGTNEDSRASQSRGRRRRQPTSRTLRQTSQSRPEVLERNESGSDCKKGVHSHSSARKVEREGSRCASRGLHLSSTTRCTAXELDVAKQEEKEEEDNKEGYADEEQKIENSTQERKVVNTSMEDKATSHSTKGSFRLTNSDSNKELHKAIKVRGSLSKTDITEKAKFVNEVVEKEIISQVFKIDNRFTFDILHAGSYYERLKVGEADEFDIMVQLNAAKLSNIFQPRFCVARRHSRHLVGFAYLEYQSHFDGHKKWEDLLETGGPDSRPLLSPKLILEHFKELLSQRLHQINCVGKQPWRSYCEPSLHGPAVKLTFCLANDKTLDIDVVLCIQSQHWPPVANNWGVLNPLQWPGAQQVENIKKRGCHVVPKVNPRDQKCWRTSFSLAEKDLLSPKSIDEDKEHYKIVKVIFERHKASLEPLCSYHLKTLFLWLRSDGNWTEKRTQFKVIEYFIQQLLEKVRMKELPHFFIGHNLNLFSDLSDAQVTNITTCLKEIIKNK.

Over residues 1–10 (MPVGSRQNRV) the composition is skewed to polar residues. Disordered stretches follow at residues 1-116 (MPVG…CASR) and 134-186 (AKQE…RLTN). The span at 35–45 (YTERKERKDVQ) shows a compositional bias: basic and acidic residues. Low complexity predominate over residues 69-80 (TSRTLRQTSQSR). 2 stretches are compositionally biased toward basic and acidic residues: residues 82–95 (EVLE…DCKK) and 145–174 (KEGY…DKAT). Polar residues predominate over residues 175–186 (SHSTKGSFRLTN). ATP contacts are provided by residues Ser-243 and 255–257 (EFD). Mg(2+)-binding residues include Glu-255, Asp-257, and Asp-374. GTP-binding positions include Asp-374 and 428-435 (RTSFSLAE). Residues 432 to 435 (SLAE), Lys-455, and 470 to 474 (SYHLK) each bind ATP.

Belongs to the mab-21 family. It depends on Mg(2+) as a cofactor. Mn(2+) is required as a cofactor.

The catalysed reaction is GTP + ATP = 2',3'-cGAMP + 2 diphosphate. It catalyses the reaction GTP + ATP = pppGp(2'-5')A + diphosphate. It carries out the reaction pppGp(2'-5')A = 2',3'-cGAMP + diphosphate. Functionally, nucleotidyltransferase that catalyzes the formation of cyclic GMP-AMP (2',3'-cGAMP) from ATP and GTP and plays a key role in innate immunity. Directly binds some unknown ligand, activating the nucleotidyltransferase activity, leading to synthesis of 2',3'-cGAMP, a second messenger that binds to and activates Sting, thereby triggering the immune response via activation of the NF-kappa-B transcription factor. The polypeptide is Cyclic GMP-AMP synthase-like receptor (Exaiptasia diaphana (Tropical sea anemone)).